A 1155-amino-acid chain; its full sequence is DNA-directed RNA polymerase subunit beta (1155 aa).

It belongs to the RNA polymerase beta chain family. As to quaternary structure, the RNAP catalytic core consists of 2 alpha, 1 beta, 1 beta' and 1 omega subunit. When a sigma factor is associated with the core the holoenzyme is formed, which can initiate transcription.

The enzyme catalyses RNA(n) + a ribonucleoside 5'-triphosphate = RNA(n+1) + diphosphate. Its function is as follows. DNA-dependent RNA polymerase catalyzes the transcription of DNA into RNA using the four ribonucleoside triphosphates as substrates. The protein is DNA-directed RNA polymerase subunit beta of Borrelia duttonii (strain Ly).